The sequence spans 195 residues: Pyruvoyl-dependent arginine decarboxylase AaxB (195 aa).

Residue serine 53 is modified to Pyruvic acid (Ser).

The protein belongs to the pyruvoyl-dependent arginine decarboxylase family. In terms of assembly, trimer of an alpha-beta dimer. Pyruvate serves as cofactor.

The protein localises to the cytoplasm. The enzyme catalyses L-arginine + H(+) = agmatine + CO2. With respect to regulation, inhibited by argininamide. Part of the AaxABC system, catalyzes the decarboxylation of L-arginine. The arginine uptake by the bacterium in the macrophage may be a virulence factor against the host innate immune response. This chain is Pyruvoyl-dependent arginine decarboxylase AaxB (aaxB), found in Chlamydia pneumoniae (Chlamydophila pneumoniae).